A 251-amino-acid chain; its full sequence is Octanoyltransferase (251 aa).

Residues 56–237 enclose the BPL/LPL catalytic domain; the sequence is ADTGDEIWVV…RLIANLDGES (182 aa). Substrate-binding positions include 96–103, 168–170, and 181–183; these read RGGQITYH, ALG, and GLS. Cys-199 serves as the catalytic Acyl-thioester intermediate.

It belongs to the LipB family.

It localises to the cytoplasm. The catalysed reaction is octanoyl-[ACP] + L-lysyl-[protein] = N(6)-octanoyl-L-lysyl-[protein] + holo-[ACP] + H(+). It functions in the pathway protein modification; protein lipoylation via endogenous pathway; protein N(6)-(lipoyl)lysine from octanoyl-[acyl-carrier-protein]: step 1/2. Catalyzes the transfer of endogenously produced octanoic acid from octanoyl-acyl-carrier-protein onto the lipoyl domains of lipoate-dependent enzymes. Lipoyl-ACP can also act as a substrate although octanoyl-ACP is likely to be the physiological substrate. The protein is Octanoyltransferase of Burkholderia ambifaria (strain MC40-6).